A 376-amino-acid chain; its full sequence is 1-acyl-sn-glycerol-3-phosphate acyltransferase gamma (376 aa).

Residues 1 to 124 (MGLLAFLKTQ…LGSSKVLAKK (124 aa)) lie on the Cytoplasmic side of the membrane. The HXXXXD motif signature appears at 96 to 101 (HNFEID). Residues 125–145 (ELLYVPLIGWTWYFLEIVFCK) traverse the membrane as a helical segment. Over 146–316 (RKWEEDRDTV…TLLNFLSWAT (171 aa)) the chain is Lumenal. A helical membrane pass occupies residues 317 to 339 (ILLSPLFSFVLGVFASGSPLLIL). Residues 340-376 (TFLGFVGAASFGVRRLIGVTEIEKGSSYGNQEFKKKE) lie on the Cytoplasmic side of the membrane.

This sequence belongs to the 1-acyl-sn-glycerol-3-phosphate acyltransferase family.

The protein localises to the endoplasmic reticulum membrane. Its subcellular location is the nucleus envelope. The catalysed reaction is a 1-acyl-sn-glycero-3-phosphate + an acyl-CoA = a 1,2-diacyl-sn-glycero-3-phosphate + CoA. It catalyses the reaction pentadecanoyl-CoA + 1-(9Z-octadecenoyl)-sn-glycero-3-phosphate = 1-(9Z)-octadecenoyl-2-pentadecanoyl-sn-glycero-3-phosphate + CoA. The enzyme catalyses heptadecanoyl-CoA + 1-(9Z-octadecenoyl)-sn-glycero-3-phosphate = 1-(9Z)-octadecenoyl-2-heptadecanoyl-sn-glycero-3-phosphate + CoA. It carries out the reaction 1-(9Z-octadecenoyl)-sn-glycero-3-phosphate + octadecanoyl-CoA = 1-(9Z-octadecenoyl)-2-octadecanoyl-sn-glycero-3-phosphate + CoA. The catalysed reaction is nonadecanoyl-CoA + 1-(9Z-octadecenoyl)-sn-glycero-3-phosphate = 1-(9Z)-octadecenoyl-2-nonadecanoyl-sn-glycero-3-phosphate + CoA. It catalyses the reaction 1-(9Z-octadecenoyl)-sn-glycero-3-phosphate + (5Z,8Z,11Z,14Z)-eicosatetraenoyl-CoA = 1-(9Z)-octadecenoyl-2-(5Z,8Z,11Z,14Z)-eicosatetraenoyl-sn-glycero-3-phosphate + CoA. The enzyme catalyses 1-(9Z-octadecenoyl)-sn-glycero-3-phosphate + (9Z)-octadecenoyl-CoA = 1,2-di-(9Z-octadecenoyl)-sn-glycero-3-phosphate + CoA. It carries out the reaction 1-(9Z-octadecenoyl)-sn-glycero-3-phosphate + (9Z,12Z)-octadecadienoyl-CoA = 1-(9Z)-octadecenoyl-2-(9Z,12Z)-octadecadienoyl-sn-glycero-3-phosphate + CoA. The catalysed reaction is 1-(9Z-octadecenoyl)-sn-glycero-3-phosphocholine + (5Z,8Z,11Z,14Z)-eicosatetraenoyl-CoA = 1-(9Z)-octadecenoyl-2-(5Z,8Z,11Z,14Z)-icosatetraenoyl-sn-glycero-3-phosphocholine + CoA. It catalyses the reaction 1-(9Z-octadecenoyl)-sn-glycero-3-phospho-(1D-myo-inositol) + (5Z,8Z,11Z,14Z)-eicosatetraenoyl-CoA = 1-(9Z-octadecenoyl)-2-(5Z,8Z,11Z,14Z-eicosatetraenoyl)-sn-glycero-3-phospho-1D-myo-inositol + CoA. The enzyme catalyses 1-(9Z-octadecenoyl)-sn-glycero-3-phospho-L-serine + (5Z,8Z,11Z,14Z)-eicosatetraenoyl-CoA = 1-(9Z-octadecenoyl)-2-(5Z,8Z,11Z,14Z-eicosatetraenoyl)-sn-glycero-3-phospho-L-serine + CoA. It carries out the reaction 1-hexadecanoyl-sn-glycero-3-phosphate + (9Z)-octadecenoyl-CoA = 1-hexadecanoyl-2-(9Z-octadecenoyl)-sn-glycero-3-phosphate + CoA. The catalysed reaction is 1-hexadecanoyl-sn-glycero-3-phosphate + (5Z,8Z,11Z,14Z)-eicosatetraenoyl-CoA = 1-hexadecanoyl-2-(5Z,8Z,11Z,14Z-eicosatetraenoyl)-sn-glycero-3-phosphate + CoA. It catalyses the reaction 1-heptadecanoyl-sn-glycero-3-phosphate + (5Z,8Z,11Z,14Z)-eicosatetraenoyl-CoA = 1-heptadecanoyl-2-(5Z,8Z,11Z,14Z)-eicosatetraenoyl-sn-glycero-3-phosphate + CoA. The enzyme catalyses 1-octadecanoyl-sn-glycero-3-phosphate + (9Z)-octadecenoyl-CoA = 1-octadecanoyl-2-(9Z-octadecenoyl)-sn-glycero-3-phosphate + CoA. It carries out the reaction 1-octadecanoyl-sn-glycero-3-phosphate + (5Z,8Z,11Z,14Z)-eicosatetraenoyl-CoA = 1-octadecanoyl-2-(5Z,8Z,11Z,14Z-eicosatetraenoyl)-sn-glycero-3-phosphate + CoA. The catalysed reaction is 1-(9Z-octadecenoyl)-sn-glycero-3-phosphate + hexadecanoyl-CoA = 1-hexadecanoyl-2-(9Z-octadecenoyl)-sn-glycero-3-phosphate + CoA. It catalyses the reaction 1-O-(9Z-octadecenyl)-sn-glycero-3-phosphate + (5Z,8Z,11Z,14Z)-eicosatetraenoyl-CoA = 1-O-(9Z-octadecenyl)-2-(5Z,8Z,11Z,14Z-eicosatetraenoyl)-sn-glycero-3-phosphate + CoA. The enzyme catalyses a 1-acyl-sn-glycero-3-phospho-(1D-myo-inositol) + (5Z,8Z,11Z,14Z)-eicosatetraenoyl-CoA = a 1-acyl-2-(5Z,8Z,11Z,14Z-eicosatetraenoyl)-sn-glycero-3-phospho-(1D-myo-inositol) + CoA. Its pathway is phospholipid metabolism; CDP-diacylglycerol biosynthesis; CDP-diacylglycerol from sn-glycerol 3-phosphate: step 2/3. In terms of biological role, converts 1-acyl-sn-glycerol-3-phosphate (lysophosphatidic acid or LPA) into 1,2-diacyl-sn-glycerol-3-phosphate (phosphatidic acid or PA) by incorporating an acyl moiety at the sn-2 position of the glycerol backbone. Acts on LPA containing saturated or unsaturated fatty acids C16:0-C20:4 at the sn-1 position using C18:1, C20:4 or C18:2-CoA as the acyl donor. Also acts on lysophosphatidylcholine, lysophosphatidylinositol and lysophosphatidylserine using C18:1 or C20:4-CoA. Has a preference for arachidonoyl-CoA as a donor. Also has a modest lysophosphatidylinositol acyltransferase (LPIAT) activity, converts lysophosphatidylinositol (LPI) into phosphatidylinositol. This Pongo abelii (Sumatran orangutan) protein is 1-acyl-sn-glycerol-3-phosphate acyltransferase gamma (AGPAT3).